The sequence spans 428 residues: Peptidase B (428 aa).

Lys-195 and Asp-200 together coordinate Mn(2+). The active site involves Lys-207. Residues Asp-218, Asp-277, and Glu-279 each contribute to the Mn(2+) site. Arg-281 is an active-site residue.

It belongs to the peptidase M17 family. Homohexamer. The cofactor is Mn(2+).

The protein localises to the cytoplasm. It carries out the reaction Release of an N-terminal amino acid, Xaa, from a peptide or arylamide. Xaa is preferably Glu or Asp but may be other amino acids, including Leu, Met, His, Cys and Gln.. Functionally, probably plays an important role in intracellular peptide degradation. The chain is Peptidase B from Cronobacter sakazakii (strain ATCC BAA-894) (Enterobacter sakazakii).